A 423-amino-acid chain; its full sequence is uncharacterized protein (423 aa).

It belongs to the mycobacterial PPE family.

In terms of biological role, could be required for host endothelial-cell invasion and/or intracellular survival. This is an uncharacterized protein from Mycobacterium tuberculosis (strain CDC 1551 / Oshkosh).